The following is a 397-amino-acid chain: Tryptophan synthase beta chain 1 (397 aa).

The residue at position 90 (lysine 90) is an N6-(pyridoxal phosphate)lysine.

It belongs to the TrpB family. In terms of assembly, tetramer of two alpha and two beta chains. Requires pyridoxal 5'-phosphate as cofactor.

It catalyses the reaction (1S,2R)-1-C-(indol-3-yl)glycerol 3-phosphate + L-serine = D-glyceraldehyde 3-phosphate + L-tryptophan + H2O. The protein operates within amino-acid biosynthesis; L-tryptophan biosynthesis; L-tryptophan from chorismate: step 5/5. Its function is as follows. The beta subunit is responsible for the synthesis of L-tryptophan from indole and L-serine. The protein is Tryptophan synthase beta chain 1 (trpB1) of Aquifex aeolicus (strain VF5).